Here is a 59-residue protein sequence, read N- to C-terminus: Photosystem II reaction center protein K (59 aa).

A propeptide spanning residues 1 to 22 (MLNIFSLICLNSALYSSSFFFG) is cleaved from the precursor. A helical transmembrane segment spans residues 30–50 (FLSPIVDFMPVIPLFFFLLAF).

PSII is composed of 1 copy each of membrane proteins PsbA, PsbB, PsbC, PsbD, PsbE, PsbF, PsbH, PsbI, PsbJ, PsbK, PsbL, PsbM, PsbT, PsbX, PsbY, PsbZ, Psb30/Ycf12, at least 3 peripheral proteins of the oxygen-evolving complex and a large number of cofactors. It forms dimeric complexes. This protein, PsbL and plastoquinone-9 are found in PSII dimers but not seen in PSII monomers.

It is found in the plastid. It localises to the chloroplast thylakoid membrane. One of the components of the core complex of photosystem II (PSII). PSII is a light-driven water:plastoquinone oxidoreductase that uses light energy to abstract electrons from H(2)O, generating O(2) and a proton gradient subsequently used for ATP formation. It consists of a core antenna complex that captures photons, and an electron transfer chain that converts photonic excitation into a charge separation. May be involved in PSII dimerization. Functionally, one of the components of the core complex of photosystem II (PSII). PSII is a light-driven water:plastoquinone oxidoreductase that uses light energy to abstract electrons from H(2)O, generating O(2) and a proton gradient subsequently used for ATP formation. It consists of a core antenna complex that captures photons, and an electron transfer chain that converts photonic excitation into a charge separation. This chain is Photosystem II reaction center protein K, found in Spinacia oleracea (Spinach).